The chain runs to 415 residues: Dynein assembly factor with WD repeat domains 1 (415 aa).

WD repeat units lie at residues 90-129 (AHIL…ELHT), 132-174 (GHKN…HTFR), 175-214 (GHTA…EVVT), 217-256 (GHLA…KVHT), 259-298 (GHCA…YVAT), 301-340 (GHDD…CVTK), 343-384 (GHEG…QVLE), and 386-415 (HTDE…RIWR).

It belongs to the WD repeat WDR69 family. Interacts with IFT46. As to expression, in early mouse embryos, expression is limited to distal, motile ciliated cells of the node.

It localises to the cytoplasm. Its subcellular location is the cytoskeleton. The protein resides in the flagellum basal body. It is found in the flagellum axoneme. Functionally, required for axonemal dynein assembly and ciliary motility in ciliated organs, including Kupffer's vesicle, during embryogenesis. Facilitates the onset of robust cilia motility during development. In Mus musculus (Mouse), this protein is Dynein assembly factor with WD repeat domains 1.